The following is a 232-amino-acid chain: Ribose-5-phosphate isomerase A (232 aa).

Residues 28–31, 83–86, and 96–99 each bind substrate; these read TGST, DGAD, and KGGG. The Proton acceptor role is filled by Glu105. Position 123 (Lys123) interacts with substrate.

This sequence belongs to the ribose 5-phosphate isomerase family. In terms of assembly, homodimer.

It carries out the reaction aldehydo-D-ribose 5-phosphate = D-ribulose 5-phosphate. The protein operates within carbohydrate degradation; pentose phosphate pathway; D-ribose 5-phosphate from D-ribulose 5-phosphate (non-oxidative stage): step 1/1. In terms of biological role, catalyzes the reversible conversion of ribose-5-phosphate to ribulose 5-phosphate. In Rhizobium etli (strain CIAT 652), this protein is Ribose-5-phosphate isomerase A.